A 238-amino-acid polypeptide reads, in one-letter code: Xyloglucan-specific endo-beta-1,4-glucanase A (238 aa).

The signal sequence occupies residues 1–14; sequence MKLSLLSLATLASA.

The protein belongs to the glycosyl hydrolase 12 (cellulase H) family.

It localises to the secreted. It carries out the reaction xyloglucan + H2O = xyloglucan oligosaccharides.. In terms of biological role, catalyzes endohydrolysis of 1,4-beta-D-glucosidic linkages in xyloglucan with retention of the beta-configuration of the glycosyl residues. Specific for xyloglucan and does not hydrolyze other cell wall components. This Aspergillus aculeatus protein is Xyloglucan-specific endo-beta-1,4-glucanase A (xgeA).